A 502-amino-acid polypeptide reads, in one-letter code: TGF-beta-activated kinase 1 and MAP3K7-binding protein 1 (502 aa).

The interval 1–21 is disordered; that stretch reads MAAQRRSLLQSEQQPSWTDDL. S7 carries the post-translational modification Phosphoserine. The segment covering 7 to 17 has biased composition (polar residues); sequence SLLQSEQQPSW. A PPM-type phosphatase domain is found at 28–365; that stretch reads GVGSASNRSY…EDMTLLVRNF (338 aa). S393 carries O-linked (GlcNAc) serine glycosylation. Residues 414-437 are compositionally biased toward polar residues; sequence QMVNGSHSASTLDEATPTLTNQSP. The segment at 414–476 is disordered; the sequence is QMVNGSHSAS…SLPPGEDGRV (63 aa). S421 carries the post-translational modification Phosphoserine. T429 is modified (phosphothreonine). S436 bears the Phosphoserine mark. Positions 438-455 are enriched in low complexity; the sequence is TLTLQSTNTHTQSSSSSS. Position 440 is a phosphothreonine (T440).

As to quaternary structure, interacts with XIAP and BIRC7. Interacts with TRAF6 and MAP3K7; during IL-1 signaling. Identified in the TRIKA2 complex composed of MAP3K7, TAB1 and TAB2. Interacts with TRAF6 and MAPK14; these interactions allow MAPK14 autophosphorylation. Interacts with STING1; interaction takes place following cGAMP activation and promotes TAB1 recruitment to the endoplasmic reticulum, triggering MAP3K7/TAK1 activation and STING1 phosphorylation. Phosphorylated at all three sites Ser-421, Thr-429 and Ser-436 by MAPK14 when cells were exposed to cellular stresses, or stimulated with TNF-alpha, IL1 or LPS. These phosphorylations inhibit TAK1 activation by a feedback control mechanism. Dephosphorylated by DUSP14 at Ser-436, leading to TAB1-MAP3K7/TAK1 complex inactivation in T-cells. Post-translationally, ubiquitinated by MAP3K1 with 'Lys-63'-linked polyubiquitin; leading to activation of TAK1 and of JNK and p38 MAP kinases following EGF and TGF-beta stimulation. Ubiquitinated by ITCH with 'Lys-48'-linked polyubiquitin; leading to proteasomal degradation. Ubiquitinated by RNF114 during maternal-to-zygotic transition; leading to degradation. In terms of processing, O-GlcNAcylated at Ser-393 is required for full MAP3K7/TAK1 activation upon stimulation with IL-1 or osmotic stress.

The protein resides in the cytoplasm. The protein localises to the cytosol. Its subcellular location is the endoplasmic reticulum membrane. Functionally, key adapter protein that plays an essential role in JNK and NF-kappa-B activation and proinflammatory cytokines production in response to stimulation with TLRs and cytokines. Mechanistically, associates with the catalytic domain of MAP3K7/TAK1 to trigger MAP3K7/TAK1 autophosphorylation leading to its full activation. Similarly, associates with MAPK14 and triggers its autophosphorylation and subsequent activation. In turn, MAPK14 phosphorylates TAB1 and inhibits MAP3K7/TAK1 activation in a feedback control mechanism. Also plays a role in recruiting MAPK14 to the TAK1 complex for the phosphorylation of the TAB2 and TAB3 regulatory subunits. The protein is TGF-beta-activated kinase 1 and MAP3K7-binding protein 1 (Tab1) of Mus musculus (Mouse).